Consider the following 595-residue polypeptide: Probable L-gulonolactone oxidase 1 (595 aa).

A signal peptide spans 1–18 (MAFWLSLIFFCFCTFASS). Positions 47–229 (SICEAAKVEY…SQVTFQLQPM (183 aa)) constitute an FAD-binding PCMH-type domain.

This sequence belongs to the oxygen-dependent FAD-linked oxidoreductase family. The cofactor is FAD.

It catalyses the reaction L-gulono-1,4-lactone + O2 = L-ascorbate + H2O2 + H(+). Its pathway is cofactor biosynthesis; L-ascorbate biosynthesis. May be involved in the biosynthesis of ascorbic acid. This is Probable L-gulonolactone oxidase 1 from Arabidopsis thaliana (Mouse-ear cress).